Consider the following 160-residue polypeptide: Lipoprotein signal peptidase (160 aa).

Helical transmembrane passes span 60–80 (TEWL…AFFL) and 84–104 (LPFL…AGTI). Catalysis depends on residues Asp118 and Asp132. A helical membrane pass occupies residues 127–147 (TFNMADSCLTLGIIWLVLLYL).

The protein belongs to the peptidase A8 family.

The protein localises to the cell membrane. It catalyses the reaction Release of signal peptides from bacterial membrane prolipoproteins. Hydrolyzes -Xaa-Yaa-Zaa-|-(S,diacylglyceryl)Cys-, in which Xaa is hydrophobic (preferably Leu), and Yaa (Ala or Ser) and Zaa (Gly or Ala) have small, neutral side chains.. Its pathway is protein modification; lipoprotein biosynthesis (signal peptide cleavage). Functionally, this protein specifically catalyzes the removal of signal peptides from prolipoproteins. In Dehalococcoides mccartyi (strain ATCC BAA-2266 / KCTC 15142 / 195) (Dehalococcoides ethenogenes (strain 195)), this protein is Lipoprotein signal peptidase.